The chain runs to 143 residues: uncharacterized protein (143 aa).

Residues 13 to 143 (SLQFPHHRPG…QDAAHQCRIQ (131 aa)) form a disordered region. A compositionally biased stretch (basic residues) spans 17–31 (PHHRPGLRRHRKNTT). 3 stretches are compositionally biased toward basic and acidic residues: residues 35-48 (AAVDRPRRTRRGDA), 84-96 (DGREASRTAAEEK), and 112-133 (EKQHVGQDPDANGNHDDDDHAG). Positions 134-143 (QDAAHQCRIQ) are enriched in low complexity.

This is an uncharacterized protein from Homo sapiens (Human).